A 545-amino-acid polypeptide reads, in one-letter code: MPMDTETKQSGDLIFRSKLPDIYIPKHLPLHSYCFENLSEFNSRPCLIDGANDRIYTYAEVELTSRKVAVGLNKLGIQQKDTIMILLPNCPEFVFAFIGASYLGAISTMANPLFTPAEVVKQAKASSAKIVITQACFAGKVKDYAIENDLKVICVDSVPEGCVHFSELIQSDEHEIPDVKIQPDDVVALPYSSGTTGLPKGVMLTHKGLVTSVAQQVDGENANLYMHSDDVLMCVLPLFHIYSLNSVLLCALRVGAAILIMQKFDIAQFLELIPKHKVTIGPFVPPIVLAIAKSPLVDNYDLSSVRTVMSGAAPLGKELEDAVRAKFPNAKLGQGYGMTEAGPVLAMCLAFAKEPFDIKSGACGTVVRNAEMKIVDPDTGCSLPRNQPGEICIRGDQIMKGYLNDPEATARTIEKEGWLHTGDIGFIDDDDELFIVDRLKELIKYKGFQVAPAELEALLINHPDISDAAVVPMIDEQAGEVPVAFVVRSNGSTITEDEVKDFISKQVIFYKRIKRVFFVETVPKSPSGKILRKDLRARLAAGISN.

Positions 192, 193, 194, 195, 196, and 200 each coordinate ATP. Tyr242 and Ser246 together coordinate (E)-4-coumaroyl-AMP. CoA is bound at residue Lys263. Positions 265–334 (DIAQFLELIP…AKFPNAKLGQ (70 aa)) are SBD1. 5 residues coordinate (E)-4-coumaroyl-AMP: Ala312, Gln334, Gly335, Thr339, and Met347. Residues Gln334, Gly335, and Thr339 each contribute to the ATP site. The tract at residues 335–402 (GYGMTEAGPV…IRGDQIMKGY (68 aa)) is SBD2. 2 residues coordinate ATP: Asp423 and Arg438. Positions 440 and 444 each coordinate (E)-4-coumaroyl-AMP. 2 residues coordinate CoA: Lys446 and Gly447. Lys529 serves as a coordination point for ATP.

Belongs to the ATP-dependent AMP-binding enzyme family. Mg(2+) is required as a cofactor.

It catalyses the reaction (E)-4-coumarate + ATP + CoA = (E)-4-coumaroyl-CoA + AMP + diphosphate. It carries out the reaction (E)-4-coumarate + ATP + H(+) = (E)-4-coumaroyl-AMP + diphosphate. The catalysed reaction is (E)-4-coumaroyl-AMP + CoA = (E)-4-coumaroyl-CoA + AMP + H(+). Its pathway is phytoalexin biosynthesis; 3,4',5-trihydroxystilbene biosynthesis; 3,4',5-trihydroxystilbene from trans-4-coumarate: step 1/2. Carboxylate--CoA ligase that may use 4-coumarate as substrate. Follows a two-step reaction mechanism, wherein the carboxylate substrate first undergoes adenylation by ATP, followed by a thioesterification in the presence of CoA to yield the final CoA thioester. The sequence is that of 4-coumarate--CoA ligase 1 (4CL1) from Solanum tuberosum (Potato).